We begin with the raw amino-acid sequence, 528 residues long: Probable rhamnogalacturonate lyase A (528 aa).

The signal sequence occupies residues 1–20 (MLSKATLLLSLPFWARVANA). N-linked (GlcNAc...) asparagine glycosylation is present at asparagine 46. 2 disulfide bridges follow: cysteine 50/cysteine 93 and cysteine 184/cysteine 193. N-linked (GlcNAc...) asparagine glycosylation occurs at asparagine 351.

This sequence belongs to the polysaccharide lyase 4 family.

It is found in the secreted. The catalysed reaction is Endotype eliminative cleavage of L-alpha-rhamnopyranosyl-(1-&gt;4)-alpha-D-galactopyranosyluronic acid bonds of rhamnogalacturonan I domains in ramified hairy regions of pectin leaving L-rhamnopyranose at the reducing end and 4-deoxy-4,5-unsaturated D-galactopyranosyluronic acid at the non-reducing end.. In terms of biological role, pectinolytic enzymes consist of four classes of enzymes: pectin lyase, polygalacturonase, pectin methylesterase and rhamnogalacturonase. Degrades the rhamnogalacturonan I (RG-I) backbone of pectin. The sequence is that of Probable rhamnogalacturonate lyase A (rglA) from Neosartorya fischeri (strain ATCC 1020 / DSM 3700 / CBS 544.65 / FGSC A1164 / JCM 1740 / NRRL 181 / WB 181) (Aspergillus fischerianus).